The sequence spans 134 residues: FK506-binding protein 2 (134 aa).

The first 19 residues, 1–19 (MRILLLSALFLSLTTLVLS), serve as a signal peptide directing secretion. Residues 39 to 127 (GDTVHMHYRG…IFETELVQIE (89 aa)) enclose the PPIase FKBP-type domain. Residues 131 to 134 (NDEL) carry the Prevents secretion from ER motif.

It belongs to the FKBP-type PPIase family. FKBP2 subfamily.

The protein localises to the endoplasmic reticulum. The catalysed reaction is [protein]-peptidylproline (omega=180) = [protein]-peptidylproline (omega=0). Inhibited by both FK506 and rapamycin. In terms of biological role, PPIases accelerate the folding of proteins. It catalyzes the cis-trans isomerization of proline imidic peptide bonds in oligopeptides. The chain is FK506-binding protein 2 (fpr2) from Aspergillus fumigatus (strain ATCC MYA-4609 / CBS 101355 / FGSC A1100 / Af293) (Neosartorya fumigata).